The sequence spans 105 residues: N(2)-fixation sustaining protein CowN (105 aa).

This sequence belongs to the CowN family.

Functionally, is required to sustain N(2)-dependent growth in the presence of low levels of carbon monoxide (CO). Probably acts by protecting the N(2) fixation ability of the nitrogenase complex, which is inactivated in the presence of CO. The sequence is that of N(2)-fixation sustaining protein CowN from Tolumonas auensis (strain DSM 9187 / NBRC 110442 / TA 4).